A 553-amino-acid chain; its full sequence is HTH-type transcriptional regulator SgrR (553 aa).

Positions 1–117 (MSTARLQQQF…LSQLGRSFRQ (117 aa)) constitute an HTH marR-type domain. Positions 26–49 (LQELAEVLCCSRRHVRSLLGSMQQ) form a DNA-binding region, H-T-H motif. The segment at 163–494 (ELEPDLSHHW…EELHQDVELW (332 aa)) is solute-binding.

Its function is as follows. Activates the small RNA gene sgrS under glucose-phosphate stress conditions as well as yfdZ. Represses its own transcription under both stress and non-stress conditions. Might act as a sensor of the intracellular accumulation of phosphoglucose by binding these molecules in its C-terminal solute-binding domain. The chain is HTH-type transcriptional regulator SgrR from Yersinia enterocolitica serotype O:8 / biotype 1B (strain NCTC 13174 / 8081).